The following is a 904-amino-acid chain: MTESTQLQTAENNNAGVVKMEPPPPATSSVSVSAAAAAHALSSLSSLTMAATGSALSPATPPPSLNLSHQQQQHQQHYALKWNDFQSSILSSFRHLRDEEDFVDVTLACDERSFTAHKVVLSACSPYFRRLLKANPCEHPIVILRDVRCDDVENLLSFMYNGEVNVSHEQLPDFLKTAHLLQIRGLADVNGGYPYSKALSAALSHNSSNNNNNNSSSNNSLSNNNNNNNNNAESSNHNKISSYLSPNQTSAACNNSSNSNSNNHSSSHNNSSSNNISGSLNSSLNSPFSAPQIPPPVTASSAAAAAAAAASLTAAVAAAAAATAASAGSSSSAASGQTSGTPAIQELKASSAASPVRNPNPNPSKASSSNHWDMGEMEGSRKSHLTPPPQKRIKSADLFRAQHGISPERLLLDREFPVAGQHPLTRNRSGRDTSKDRERNLELRESLLGQALENSNGQQANPKHELGQSAGEDSNSSDTEPSDRGDGQHDGTLDGIDNQRSHSFPNAFLGLQGIPGLLPGPSGINSDFVSRRSLEMRVRATDPRPCPKCGKIYRSAHTLRTHLEDKHTVCPGYRCVLCGTVAKSRNSLHSHMSRQHRGISTKDLPVLPMPSAFDPELASRLLAKAGVKISPAELRARASPTGGSGSSGGGGGGGSSQAKLDLSNASGGPMDDAEDSDDDPEDLTTGNGLYGMGGSSSDLSRYHESLLSNFGHARMRNEAAAVAATAAALGQPKDLGVQLPNSNAPGQSLLDTYLQFITENTFGMGMSQEQAAAAALRAKMAQLNAMGHSLDNLPPGLLPGQFDLSKLAAGNPAFGQSGPGLTIEPIMRHEQAAGNLSPNRPLALNSGGRMMGHDEMAENDGDMRREGSEPMDLGLDNNQSGSNHEVANSDAEENYSEDEGVHNT.

Over residues 1 to 15 (MTESTQLQTAENNNA) the composition is skewed to polar residues. Disordered stretches follow at residues 1–30 (MTESTQLQTAENNNAGVVKMEPPPPATSSV) and 53–72 (GSALSPATPPPSLNLSHQQQ). The region spanning 103 to 168 (VDVTLACDER…MYNGEVNVSH (66 aa)) is the BTB domain. A compositionally biased stretch (low complexity) spans 204–238 (SHNSSNNNNNNSSSNNSLSNNNNNNNNNAESSNHN). Disordered regions lie at residues 204-287 (SHNS…LNSP), 349-390 (ASSA…PPPQ), 411-438 (LLDREFPVAGQHPLTRNRSGRDTSKDRE), and 451-501 (ALEN…NQRS). Over residues 239-253 (KISSYLSPNQTSAAC) the composition is skewed to polar residues. Low complexity predominate over residues 254-286 (NNSSNSNSNNHSSSHNNSSSNNISGSLNSSLNS). The span at 429-438 (SGRDTSKDRE) shows a compositional bias: basic and acidic residues. Polar residues predominate over residues 452–461 (LENSNGQQAN). S474 carries the phosphoserine modification. Residues 481-500 (PSDRGDGQHDGTLDGIDNQR) are compositionally biased toward basic and acidic residues. C2H2-type zinc fingers lie at residues 544–567 (RPCPKCGKIYRSAHTLRTHLEDKH) and 573–596 (YRCVLCGTVAKSRNSLHSHMSRQH). Disordered stretches follow at residues 633–696 (ELRA…GGSS) and 832–904 (AAGN…VHNT). The span at 642-655 (GGSGSSGGGGGGGS) shows a compositional bias: gly residues. A compositionally biased stretch (acidic residues) spans 671-682 (DDAEDSDDDPED). Phosphoserine is present on residues S837, S846, and S868. Over residues 851 to 868 (MGHDEMAENDGDMRREGS) the composition is skewed to basic and acidic residues. Polar residues predominate over residues 876 to 886 (DNNQSGSNHEV). 2 positions are modified to phosphoserine: S889 and S896.

As to expression, expressed in CNS midline cells during embryonic stages 9-13. Expression also seen in cells of the stomagastric nervous system. Segmentally repeated stripes of ectodermal expression appear at stage 11 that become uniform by stage 12 and throughout embryogenesis. Expressed at variable levels in somatic muscles from stage 16 and in all imaginal disks during larval development. Expression is seen in da neurons that grow in two-dimensional dendrites underneath the epidermis during late embryonic, larval, and pupal stages.

The protein localises to the nucleus. Functionally, expression is vital for development; may be involved in transcriptional regulation. In embryos, muscle specific expression is required for segmental nerve b (SNb) motoneuron target recognition within ventral longitudinal muscles. Has a role in establishing and maintaining embryonic muscle attachments, adult sensory cell formation (macrochaetae) and morphogenesis of adult appendages (legs, antenna aristae and male external genitalia). Has a role in the morphogenesis of the class I dendritic neurons: selective expression of ab in class I da neurons plays a pivotal role in forming dendritic arbors, which are characteristic of the class I cells. The development of more complex arbors of class II-IV neurons depends on the absence of ab. The sequence is that of Protein abrupt (ab) from Drosophila melanogaster (Fruit fly).